Consider the following 344-residue polypeptide: Anthranilate phosphoribosyltransferase 2 (344 aa).

Residues glycine 81, 84-85, threonine 89, 91-94, 109-117, and alanine 121 each bind 5-phospho-alpha-D-ribose 1-diphosphate; these read GD, NIST, and KHGNRALSS. Glycine 81 provides a ligand contact to anthranilate. Serine 93 lines the Mg(2+) pocket. Asparagine 112 is a binding site for anthranilate. Arginine 167 contacts anthranilate. Positions 226 and 227 each coordinate Mg(2+).

It belongs to the anthranilate phosphoribosyltransferase family. In terms of assembly, homodimer. Mg(2+) is required as a cofactor.

The enzyme catalyses N-(5-phospho-beta-D-ribosyl)anthranilate + diphosphate = 5-phospho-alpha-D-ribose 1-diphosphate + anthranilate. The protein operates within amino-acid biosynthesis; L-tryptophan biosynthesis; L-tryptophan from chorismate: step 2/5. Functionally, catalyzes the transfer of the phosphoribosyl group of 5-phosphorylribose-1-pyrophosphate (PRPP) to anthranilate to yield N-(5'-phosphoribosyl)-anthranilate (PRA). This chain is Anthranilate phosphoribosyltransferase 2, found in Ralstonia nicotianae (strain ATCC BAA-1114 / GMI1000) (Ralstonia solanacearum).